The following is a 622-amino-acid chain: Low affinity potassium transport system protein Kup (622 aa).

12 helical membrane passes run 9–29 (LSAVTLAAIGVVYGDIGTSPL), 46–66 (PDVVFGFLSLIFWMLILVVSV), 101–121 (ILVVLGLIGGSFFYGEVVITP), 137–157 (PALDPYIVPCSIAVLTLLFVI), 165–185 (VGKLFAPVMLVWFLTLALLGL), 213–233 (VSFFALGAVVLAITGVEALYA), 247–267 (WFTVVLPSLVLNYFGQGALLL), 276–296 (PFFLLAPDWALIPLLILATLA), 337–357 (IYIPVINWTLYLAVVLVIIGF), 363–383 (LAAAYGIAVTGTMVITSILFC), 395–415 (FLVAFLLMVLLIIDIPMFSAN), and 416–436 (VLKLFSGGWLPLSLGLVMFII).

Belongs to the HAK/KUP transporter (TC 2.A.72) family.

The protein resides in the cell inner membrane. The enzyme catalyses K(+)(in) + H(+)(in) = K(+)(out) + H(+)(out). Responsible for the low-affinity transport of potassium into the cell. Likely operates as a K(+):H(+) symporter. This chain is Low affinity potassium transport system protein Kup, found in Yersinia pseudotuberculosis serotype O:1b (strain IP 31758).